The sequence spans 297 residues: Coatomer subunit epsilon-2 (297 aa).

The protein belongs to the COPE family. As to quaternary structure, oligomeric complex that consists of at least the alpha, beta, beta', gamma, delta, epsilon and zeta subunits.

Its subcellular location is the cytoplasm. The protein localises to the golgi apparatus membrane. It localises to the cytoplasmic vesicle. The protein resides in the COPI-coated vesicle membrane. Functionally, the coatomer is a cytosolic protein complex that binds to dilysine motifs and reversibly associates with Golgi non-clathrin-coated vesicles, which further mediate biosynthetic protein transport from the ER, via the Golgi up to the trans Golgi network. The coatomer complex is required for budding from Golgi membranes, and is essential for the retrograde Golgi-to-ER transport of dilysine-tagged proteins. The sequence is that of Coatomer subunit epsilon-2 from Oryza sativa subsp. japonica (Rice).